We begin with the raw amino-acid sequence, 413 residues long: CinA-like protein (413 aa).

This sequence belongs to the CinA family.

This Geobacter metallireducens (strain ATCC 53774 / DSM 7210 / GS-15) protein is CinA-like protein.